A 172-amino-acid chain; its full sequence is Transcriptional repressor NrdR (172 aa).

The segment at 3-34 (CPFCGEADTKVIDSRLVAEGDQVRRRRECLSC) is a zinc-finger region. Residues 49 to 139 (PRVVKQDGTR…VYRSFQDINE (91 aa)) form the ATP-cone domain.

Belongs to the NrdR family. The cofactor is Zn(2+).

In terms of biological role, negatively regulates transcription of bacterial ribonucleotide reductase nrd genes and operons by binding to NrdR-boxes. The sequence is that of Transcriptional repressor NrdR from Marinobacter nauticus (strain ATCC 700491 / DSM 11845 / VT8) (Marinobacter aquaeolei).